The following is a 776-amino-acid chain: MNKKILQILEYDKVKEQFMNALTTAQGQKELSDLVPLTDKDKIQLLFDEVADFRLLTQENGLLNLGKTNDLTEILRRLELEASLSGKEFVEIKKVIQLGINIQRFFDEAENVETPSLNITLEKLVDLSGLIKKLEIFDNAGSLYDNASLELMHIRASIKSHQSEIRKIMQEMLTKNLSSLSENVITIRNDRQVLPVKAENKNKIAGVVHDMSASGQTLYIEPNAVVSLNNKLNQKRIEERQEITRIYRELAEELKPYSFDIRQNAWLIGHIDFVRAKYLYLTANKASLPALTNDKDIILFAARHPLIDAKMVVANDIKFDKTLNTIVITGPNTGGKTITLKTVGLLTILAQSGLPILAEDGSRIHLFDDIFADIGDEQSIEQSLSTFSSHMTNIVQILAQADENSLVLFDELGAGTDPKEGAALAIAILENLRKRNVKTMASTHYPELKAYGVETQQVINASMEFNIDKMQPTYHLQLGVPGRSNALEISRRLGLPETIISEAGQQISESEHDVNQMIEKLEEKTREVIESSRNIKKIERENQSLHKDLTKVYNQINRERDFELEKAQKEAQEVVKKASLEAQEILKNLNDKAALKPHEIIAARKELEGLAPTIDFSKNKVLKKAKAQRGLKQGAEVNVTSYGQRGKLIRLEKDGRWTVQMGSITTRLSEEEFEVIETPEQIQAKTKNVSKKVTSKVKAQLDLRGMRYEEAELELDNYIDQALLANLIQITIVHGIGTGVIREMVQKKLQKHRHIKSYEYAPINAGGSGATIAILK.

330–337 (GPNTGGKT) lines the ATP pocket. The Smr domain maps to 701–776 (LDLRGMRYEE…GSGATIAILK (76 aa)).

Belongs to the DNA mismatch repair MutS family. MutS2 subfamily. Homodimer. Binds to stalled ribosomes, contacting rRNA.

In terms of biological role, endonuclease that is involved in the suppression of homologous recombination and thus may have a key role in the control of bacterial genetic diversity. Acts as a ribosome collision sensor, splitting the ribosome into its 2 subunits. Detects stalled/collided 70S ribosomes which it binds and splits by an ATP-hydrolysis driven conformational change. Acts upstream of the ribosome quality control system (RQC), a ribosome-associated complex that mediates the extraction of incompletely synthesized nascent chains from stalled ribosomes and their subsequent degradation. Probably generates substrates for RQC. The sequence is that of Endonuclease MutS2 from Lactococcus lactis subsp. cremoris (strain MG1363).